The sequence spans 240 residues: LexA repressor (240 aa).

A DNA-binding region (H-T-H motif) is located at residues 26–46; the sequence is FDEMKEALDLASKSGIHRLIT. Active-site for autocatalytic cleavage activity residues include S161 and K199.

This sequence belongs to the peptidase S24 family. As to quaternary structure, homodimer.

The catalysed reaction is Hydrolysis of Ala-|-Gly bond in repressor LexA.. Represses a number of genes involved in the response to DNA damage (SOS response), including recA and lexA. In the presence of single-stranded DNA, RecA interacts with LexA causing an autocatalytic cleavage which disrupts the DNA-binding part of LexA, leading to derepression of the SOS regulon and eventually DNA repair. The sequence is that of LexA repressor from Brucella ovis (strain ATCC 25840 / 63/290 / NCTC 10512).